The sequence spans 711 residues: Interferon-induced GTP-binding protein Mx2 (711 aa).

Residues 115-387 enclose the Dynamin-type G domain; it reads DLALPAIAVI…LILHINKSLP (273 aa). The segment at 125 to 132 is G1 motif; sequence GDQSSGKS. GTP is bound at residue 125-132; the sequence is GDQSSGKS. Residues 150-152 form a G2 motif region; that stretch reads VTR. Positions 225 to 228 are G3 motif; that stretch reads DLPG. GTP contacts are provided by residues 225-229 and 294-297; these read DLPGI and TKPD. Residues 294–297 form a G4 motif region; the sequence is TKPD. The G5 motif stretch occupies residues 326–329; the sequence is RCRG. The region spanning 623–711 is the GED domain; it reads NDEIGVHLNA…ARRALYMFFS (89 aa).

The protein belongs to the TRAFAC class dynamin-like GTPase superfamily. Dynamin/Fzo/YdjA family.

Its subcellular location is the cytoplasm. The protein resides in the nucleus. Its function is as follows. Interferon-induced dynamin-like GTPase with antiviral activity against vesicular stomatitis virus (VSV). In Canis lupus familiaris (Dog), this protein is Interferon-induced GTP-binding protein Mx2 (MX2).